Consider the following 503-residue polypeptide: Arabinose import ATP-binding protein AraG (503 aa).

ABC transporter domains are found at residues 5–240 and 253–497; these read LRFD…MVGR and LGDV…LPQG. 37–44 provides a ligand contact to ATP; that stretch reads GENGAGKS.

Belongs to the ABC transporter superfamily. Arabinose importer (TC 3.A.1.2.2) family. As to quaternary structure, the complex is composed of two ATP-binding proteins (AraG), two transmembrane proteins (AraH) and a solute-binding protein (AraF).

Its subcellular location is the cell inner membrane. The catalysed reaction is L-arabinose(out) + ATP + H2O = L-arabinose(in) + ADP + phosphate + H(+). Its function is as follows. Part of the ABC transporter complex AraFGH involved in arabinose import. Responsible for energy coupling to the transport system. The polypeptide is Arabinose import ATP-binding protein AraG (Burkholderia pseudomallei (strain K96243)).